Here is a 281-residue protein sequence, read N- to C-terminus: Protein EMBRYO DEFECTIVE 1674 (281 aa).

2 stretches are compositionally biased toward polar residues: residues 1 to 14 (MTTTRAKSKFQSLS) and 24 to 41 (PNTSPSTYSKTLPKPNSS). Residues 1 to 47 (MTTTRAKSKFQSLSACRFTPLPEPNTSPSTYSKTLPKPNSSPGTDGT) form a disordered region. In terms of domain architecture, SANTA spans 66-153 (VTLSDWWLTK…LGFPYDWEDY (88 aa)).

Required for normal embryo development. The chain is Protein EMBRYO DEFECTIVE 1674 from Arabidopsis thaliana (Mouse-ear cress).